The chain runs to 308 residues: uncharacterized protein (308 aa).

Positions 212–242 (EADKMTIDYMRELDNLQRQYDGLVDEDKALH) form a coiled coil.

This is an uncharacterized protein from Ostreid herpesvirus 1 (isolate France) (OsHV-1).